Reading from the N-terminus, the 521-residue chain is MDFSSNIASQLNAGTILPEGIVIITLMVVLIGDLIGGRNARMWLPYGAIAGLLAALFALYTAWDNPSTIGFLGAFNGDNLSIVFRGIIALSTIVTLLMSIRYVEQTGTSLAEFIGIMLTATLGGMFLSGANELVMIFISLEMLSISSYLMTGYMKRDPRSNEAALKYLLIGASSSAIFLYGSSLLYGLSGGETTLDTISAKILASDGSSSLGLAIALVFVIAGIAFKISAVPFHQWTPDVYEGSPTPVVAFLSVGSKAAGFALAIRLLVTAFSSIVDEWHLIFTALAILSMVLGNVVALAQTSMKRMLAYSSIGQAGFVMIGLTAGTDAGYSSMVFYLLVYLFMNLGAFSGVILFSLRTGTDQISEYAGLYQKDPLLTLGLSLCLLSLGGIPPLAGFFGKIYLFWAGWQAELYGLVLLALVTSVVSIYYYIRVVKMMVVKEPHEMSDSVKNYPEIRWNLEGMRPLQVGLVLSVIATSLAGILSNPLFSLANDSVTSTPILQSTIVNTRISQGEIPSSTIDP.

Helical transmembrane passes span 16–36 (ILPE…DLIG), 43–63 (WLPY…YTAW), 80–100 (LSIV…LMSI), 110–130 (LAEF…LSGA), 133–153 (LVMI…MTGY), 168–188 (LLIG…LYGL), 211–231 (LGLA…ISAV), 245–265 (PTPV…ALAI), 279–299 (WHLI…VVAL), 307–327 (MLAY…TAGT), 335–355 (VFYL…VILF), 379–399 (LGLS…GFFG), 401–421 (IYLF…LALV), and 467–487 (VGLV…NPLF).

The protein belongs to the complex I subunit 2 family. NDH-1 can be composed of about 15 different subunits; different subcomplexes with different compositions have been identified which probably have different functions.

Its subcellular location is the cellular thylakoid membrane. It carries out the reaction a plastoquinone + NADH + (n+1) H(+)(in) = a plastoquinol + NAD(+) + n H(+)(out). It catalyses the reaction a plastoquinone + NADPH + (n+1) H(+)(in) = a plastoquinol + NADP(+) + n H(+)(out). NDH-1 shuttles electrons from an unknown electron donor, via FMN and iron-sulfur (Fe-S) centers, to quinones in the respiratory and/or the photosynthetic chain. The immediate electron acceptor for the enzyme in this species is believed to be plastoquinone. Couples the redox reaction to proton translocation, and thus conserves the redox energy in a proton gradient. Cyanobacterial NDH-1 also plays a role in inorganic carbon-concentration. The protein is NAD(P)H-quinone oxidoreductase subunit 2 of Crocosphaera subtropica (strain ATCC 51142 / BH68) (Cyanothece sp. (strain ATCC 51142)).